We begin with the raw amino-acid sequence, 125 residues long: Large ribosomal subunit protein bL12 (125 aa).

Belongs to the bacterial ribosomal protein bL12 family. Homodimer. Part of the ribosomal stalk of the 50S ribosomal subunit. Forms a multimeric L10(L12)X complex, where L10 forms an elongated spine to which 2 to 4 L12 dimers bind in a sequential fashion. Binds GTP-bound translation factors.

In terms of biological role, forms part of the ribosomal stalk which helps the ribosome interact with GTP-bound translation factors. Is thus essential for accurate translation. The sequence is that of Large ribosomal subunit protein bL12 from Bradyrhizobium sp. (strain ORS 278).